Consider the following 347-residue polypeptide: NADH-quinone oxidoreductase subunit H (347 aa).

Transmembrane regions (helical) follow at residues Gly-22 to Leu-42, Pro-59 to Phe-79, Phe-93 to Ile-113, Ile-124 to Ala-144, Met-171 to Val-191, Pro-198 to Ala-218, Val-240 to Leu-260, Ile-285 to Ile-305, and Gly-321 to Val-341.

This sequence belongs to the complex I subunit 1 family. As to quaternary structure, NDH-1 is composed of 14 different subunits. Subunits NuoA, H, J, K, L, M, N constitute the membrane sector of the complex.

The protein localises to the cell inner membrane. The catalysed reaction is a quinone + NADH + 5 H(+)(in) = a quinol + NAD(+) + 4 H(+)(out). Functionally, NDH-1 shuttles electrons from NADH, via FMN and iron-sulfur (Fe-S) centers, to quinones in the respiratory chain. The immediate electron acceptor for the enzyme in this species is believed to be ubiquinone. Couples the redox reaction to proton translocation (for every two electrons transferred, four hydrogen ions are translocated across the cytoplasmic membrane), and thus conserves the redox energy in a proton gradient. This subunit may bind ubiquinone. The protein is NADH-quinone oxidoreductase subunit H of Orientia tsutsugamushi (strain Ikeda) (Rickettsia tsutsugamushi).